The chain runs to 257 residues: AN1-type zinc finger protein 2B (257 aa).

2 AN1-type zinc fingers span residues proline 4–isoleucine 52 and lysine 94–serine 142. Positions 10, 15, 25, 28, 33, 36, 42, 44, 100, 105, 115, 118, 123, 126, 132, and 134 each coordinate Zn(2+). The interval threonine 141–arginine 151 is VCP/p97-interacting motif (VIM). The interval glutamine 153–serine 187 is disordered. Over residues alanine 156–proline 179 the composition is skewed to low complexity. Phosphoserine occurs at positions 163, 173, and 187. UIM domains follow at residues serine 197–glutamine 216 and glutamine 221–glutamine 240. Residue cysteine 254 is modified to Cysteine methyl ester. Cysteine 254 is lipidated: S-geranylgeranyl cysteine. Positions cysteine 254–cysteine 257 match the CAAX motif motif. Positions serine 255 to cysteine 257 are cleaved as a propeptide — removed in mature form.

As to quaternary structure, binds 'Lys-48'-linked polyubiquitin chains of ubiquitinated proteins. Associates with the proteasome complex; upon exposure to arsenite. Interacts (via VIM motif) with VCP; the interaction is direct. Interacts with BAG6. Interacts with IGF1R (nascent precursor form). Interacts with DERL1, FAF2, NPLOC4 and UFD1; probably through VCP. Post-translationally, phosphorylated by MAPK14. Phosphorylation has no effect on association with the proteasome complex.

Its subcellular location is the endoplasmic reticulum membrane. Plays a role in protein homeostasis by regulating both the translocation and the ubiquitin-mediated proteasomal degradation of nascent proteins at the endoplasmic reticulum. It is involved in the regulation of signal-mediated translocation of proteins into the endoplasmic reticulum. It also plays a role in the ubiquitin-mediated proteasomal degradation of proteins for which signal-mediated translocation to the endoplasmic reticulum has failed. May therefore function in the endoplasmic reticulum stress-induced pre-emptive quality control, a mechanism that selectively attenuates the translocation of newly synthesized proteins into the endoplasmic reticulum and reroutes them to the cytosol for proteasomal degradation. By controlling the steady-state expression of the IGF1R receptor, indirectly regulates the insulin-like growth factor receptor signaling pathway. The protein is AN1-type zinc finger protein 2B of Rattus norvegicus (Rat).